The sequence spans 265 residues: Ribosomal RNA small subunit methyltransferase A (265 aa).

S-adenosyl-L-methionine is bound by residues Asn-13, Leu-15, Gly-40, Glu-61, Asp-85, and Asn-103.

This sequence belongs to the class I-like SAM-binding methyltransferase superfamily. rRNA adenine N(6)-methyltransferase family. RsmA subfamily.

The protein localises to the cytoplasm. It carries out the reaction adenosine(1518)/adenosine(1519) in 16S rRNA + 4 S-adenosyl-L-methionine = N(6)-dimethyladenosine(1518)/N(6)-dimethyladenosine(1519) in 16S rRNA + 4 S-adenosyl-L-homocysteine + 4 H(+). Specifically dimethylates two adjacent adenosines (A1518 and A1519) in the loop of a conserved hairpin near the 3'-end of 16S rRNA in the 30S particle. May play a critical role in biogenesis of 30S subunits. The sequence is that of Ribosomal RNA small subunit methyltransferase A from Aromatoleum aromaticum (strain DSM 19018 / LMG 30748 / EbN1) (Azoarcus sp. (strain EbN1)).